We begin with the raw amino-acid sequence, 176 residues long: Immunity factor for TNT homolog (176 aa).

Interacts with the tuberculosis necrotizing toxin (TNT) homolog, the C-terminal domain of the outer membrane channel protein CpnT.

Functionally, antitoxin for tuberculosis necrotizing toxin (TNT) homolog. Acts by binding directly to TNT, which inhibits NAD(+) glycohydrolase activity of TNT and protects M.bovis from self-poisoning. The chain is Immunity factor for TNT homolog from Mycobacterium bovis (strain BCG / Pasteur 1173P2).